The following is a 458-amino-acid chain: BTB/POZ domain-containing protein At5g41330 (458 aa).

A BTB domain is found at 11 to 72 (NVVSINVGGR…LRTGNLPARS (62 aa)). WD repeat units follow at residues 259–305 (DSAI…MVWE), 360–399 (LNER…LVGN), and 421–458 (SGEN…GISI).

It functions in the pathway protein modification; protein ubiquitination. May act as a substrate-specific adapter of an E3 ubiquitin-protein ligase complex (CUL3-RBX1-BTB) which mediates the ubiquitination and subsequent proteasomal degradation of target proteins. The protein is BTB/POZ domain-containing protein At5g41330 of Arabidopsis thaliana (Mouse-ear cress).